The primary structure comprises 363 residues: Phosphoserine aminotransferase (363 aa).

Arg-42 provides a ligand contact to L-glutamate. Pyridoxal 5'-phosphate-binding positions include 76-77 (GR), Trp-102, Thr-156, Asp-175, and Gln-198. Lys-199 is subject to N6-(pyridoxal phosphate)lysine. 240–241 (NT) contributes to the pyridoxal 5'-phosphate binding site.

The protein belongs to the class-V pyridoxal-phosphate-dependent aminotransferase family. SerC subfamily. In terms of assembly, homodimer. Requires pyridoxal 5'-phosphate as cofactor.

The protein localises to the cytoplasm. The catalysed reaction is O-phospho-L-serine + 2-oxoglutarate = 3-phosphooxypyruvate + L-glutamate. It catalyses the reaction 4-(phosphooxy)-L-threonine + 2-oxoglutarate = (R)-3-hydroxy-2-oxo-4-phosphooxybutanoate + L-glutamate. It functions in the pathway amino-acid biosynthesis; L-serine biosynthesis; L-serine from 3-phospho-D-glycerate: step 2/3. It participates in cofactor biosynthesis; pyridoxine 5'-phosphate biosynthesis; pyridoxine 5'-phosphate from D-erythrose 4-phosphate: step 3/5. In terms of biological role, catalyzes the reversible conversion of 3-phosphohydroxypyruvate to phosphoserine and of 3-hydroxy-2-oxo-4-phosphonooxybutanoate to phosphohydroxythreonine. This is Phosphoserine aminotransferase from Shewanella denitrificans (strain OS217 / ATCC BAA-1090 / DSM 15013).